The sequence spans 1178 residues: DNA-directed RNA polymerase subunit beta (1178 aa).

Positions 1-37 (MLEGCILPDFGQSKTDVSPSQSRPQSSPNNSVPGAPN) are disordered. Residues 17–33 (VSPSQSRPQSSPNNSVP) are compositionally biased toward low complexity.

Belongs to the RNA polymerase beta chain family. The RNAP catalytic core consists of 2 alpha, 1 beta, 1 beta' and 1 omega subunit. When a sigma factor is associated with the core the holoenzyme is formed, which can initiate transcription.

It carries out the reaction RNA(n) + a ribonucleoside 5'-triphosphate = RNA(n+1) + diphosphate. DNA-dependent RNA polymerase catalyzes the transcription of DNA into RNA using the four ribonucleoside triphosphates as substrates. The protein is DNA-directed RNA polymerase subunit beta of Mycobacterium leprae (strain Br4923).